Consider the following 132-residue polypeptide: Outer membrane protein RomA (132 aa).

The protein to M.tuberculosis Rv0906.

It is found in the cell outer membrane. The protein is Outer membrane protein RomA (romA) of Klebsiella pneumoniae.